The sequence spans 310 residues: Membrane protein insertase YidC 2 (310 aa).

A signal peptide spans 1 to 23 (MKKTLKRILFSSLSLSILLLLTG). C24 is lipidated: N-palmitoyl cysteine. The S-diacylglycerol cysteine moiety is linked to residue C24. Helical transmembrane passes span 33–53 (PYGVIWNTLGVPMANLITYFA), 58–78 (LGFGVAIIIVTIIVRVIILPL), 135–155 (FGGIGCLPLLIQMPFFSAIFF), 180–200 (LTVIIAILYFVQSWLSMQGVP), and 219–239 (VFMSISLPASVALYWFIGGIF). The interval 262-310 (EYTKNPPKAYKSNNARKDVTSSTKTTESNQAIITSKKTNRNAGKQKRRG) is disordered. Over residues 281–297 (TSSTKTTESNQAIITSK) the composition is skewed to polar residues. Residues 298–310 (KTNRNAGKQKRRG) are compositionally biased toward basic residues.

It belongs to the OXA1/ALB3/YidC family. Type 2 subfamily.

The protein localises to the cell membrane. Required for the insertion and/or proper folding and/or complex formation of integral membrane proteins into the membrane. Involved in integration of membrane proteins that insert both dependently and independently of the Sec translocase complex, as well as at least some lipoproteins. The chain is Membrane protein insertase YidC 2 from Streptococcus agalactiae serotype III (strain NEM316).